A 226-amino-acid polypeptide reads, in one-letter code: Protein FATTY ACID EXPORT 1, chloroplastic (226 aa).

The transit peptide at 1 to 39 (MASQISQLACFSSTNRQFHFQSRSFPCPMIRPQSFVVKS) directs the protein to the chloroplast. The disordered stretch occupies residues 66–87 (SKPYSTVDETATNKESITEPVE). Over residues 67-80 (KPYSTVDETATNKE) the composition is skewed to polar residues. The next 3 membrane-spanning stretches (helical) occupy residues 130–150 (LSTG…SLKI), 158–178 (FPYI…NFTA), and 186–206 (FPAG…SYVV).

It belongs to the TMEM14 family. Expressed in cotyledons, leaves, sepals and pollen.

It localises to the plastid. It is found in the chloroplast inner membrane. Functionally, mediates the export of free fatty acid from the plastids. Potentially prefers palmitic acid (C16:0) over oleic acid (C18:1) and stearic acid (C18:0). Not involved in fatty acid activation. Required for biogenesis of the outer pollen cell wall, in particular for the assembly of exine and pollen coat and for the release of ketone wax components. This chain is Protein FATTY ACID EXPORT 1, chloroplastic, found in Arabidopsis thaliana (Mouse-ear cress).